The chain runs to 566 residues: Multidrug and toxin extrusion protein 1 (566 aa).

Met1 is subject to N-acetylmethionine. The next 13 membrane-spanning stretches (helical) occupy residues 37–57, 72–92, 120–140, 152–172, 176–196, 216–236, 257–276, 295–315, 336–356, 370–390, 409–429, 437–457, and 543–563; these read LLVL…ISFI, AVTL…HGLS, LILL…EQIL, LTQT…LYTL, YLLN…ANLV, ALAN…YILW, SFLQ…WWAY, SITY…SVAA, AISL…LLGC, IVAL…FEAL, IVNA…LMFV, LWSG…VFIA, and GLLF…RVYI.

The protein belongs to the multi antimicrobial extrusion (MATE) (TC 2.A.66.1) family. As to expression, highly expressed in kidney and placenta, moderately in stomach, colon, lung, spleen, skeletal muscle and prostate, and slightly in spleen. In the kidney, found in medulla and cortex, especially in the proximal convoluted and straight tubules. No expression was observed in heart, brain, small intestine and liver. Expressed in Sertoli cells in testis.

The protein localises to the cell membrane. It is found in the apical cell membrane. It carries out the reaction thiamine(out) + H(+)(in) = thiamine(in) + H(+)(out). The enzyme catalyses estrone 3-sulfate(in) + H(+)(out) = estrone 3-sulfate(out) + H(+)(in). The catalysed reaction is creatinine(in) + H(+)(out) = creatinine(out) + H(+)(in). It catalyses the reaction agmatine(in) + H(+)(out) = agmatine(out) + H(+)(in). Multidrug efflux pump that functions as a H(+)/organic cation antiporter. Plays a physiological role in the excretion of cationic compounds including endogenous metabolites, drugs, toxins through the kidney and liver, into urine and bile respectively. Mediates the efflux of endogenous compounds such as creatinine, vitamin B1/thiamine, agmatine and estrone-3-sulfate. May also contribute to regulate the transport of cationic compounds in testis across the blood-testis-barrier. In Rattus norvegicus (Rat), this protein is Multidrug and toxin extrusion protein 1 (Slc47a1).